The sequence spans 296 residues: Ribosomal protein L11 methyltransferase (296 aa).

Residues Thr-139, Gly-163, Asp-185, and Asn-232 each contribute to the S-adenosyl-L-methionine site.

This sequence belongs to the methyltransferase superfamily. PrmA family.

It is found in the cytoplasm. The catalysed reaction is L-lysyl-[protein] + 3 S-adenosyl-L-methionine = N(6),N(6),N(6)-trimethyl-L-lysyl-[protein] + 3 S-adenosyl-L-homocysteine + 3 H(+). Methylates ribosomal protein L11. The protein is Ribosomal protein L11 methyltransferase of Picosynechococcus sp. (strain ATCC 27264 / PCC 7002 / PR-6) (Agmenellum quadruplicatum).